The primary structure comprises 116 residues: Large ribosomal subunit protein uL18 (116 aa).

The protein belongs to the universal ribosomal protein uL18 family. Part of the 50S ribosomal subunit; part of the 5S rRNA/L5/L18/L25 subcomplex. Contacts the 5S and 23S rRNAs.

Its function is as follows. This is one of the proteins that bind and probably mediate the attachment of the 5S RNA into the large ribosomal subunit, where it forms part of the central protuberance. In Teredinibacter turnerae (strain ATCC 39867 / T7901), this protein is Large ribosomal subunit protein uL18.